Here is a 345-residue protein sequence, read N- to C-terminus: Probable dual-specificity RNA methyltransferase RlmN (345 aa).

Residue E90 is the Proton acceptor of the active site. In terms of domain architecture, Radical SAM core spans 96–326 (YDYGNSICIS…STIRKEMGAD (231 aa)). An intrachain disulfide couples C103 to C331. Residues C110, C114, and C117 each coordinate [4Fe-4S] cluster. Residues 157 to 158 (GE), S189, 212 to 214 (SLH), and N288 each bind S-adenosyl-L-methionine. C331 functions as the S-methylcysteine intermediate in the catalytic mechanism.

It belongs to the radical SAM superfamily. RlmN family. It depends on [4Fe-4S] cluster as a cofactor.

Its subcellular location is the cytoplasm. The catalysed reaction is adenosine(2503) in 23S rRNA + 2 reduced [2Fe-2S]-[ferredoxin] + 2 S-adenosyl-L-methionine = 2-methyladenosine(2503) in 23S rRNA + 5'-deoxyadenosine + L-methionine + 2 oxidized [2Fe-2S]-[ferredoxin] + S-adenosyl-L-homocysteine. It carries out the reaction adenosine(37) in tRNA + 2 reduced [2Fe-2S]-[ferredoxin] + 2 S-adenosyl-L-methionine = 2-methyladenosine(37) in tRNA + 5'-deoxyadenosine + L-methionine + 2 oxidized [2Fe-2S]-[ferredoxin] + S-adenosyl-L-homocysteine. Specifically methylates position 2 of adenine 2503 in 23S rRNA and position 2 of adenine 37 in tRNAs. This chain is Probable dual-specificity RNA methyltransferase RlmN, found in Clostridium acetobutylicum (strain ATCC 824 / DSM 792 / JCM 1419 / IAM 19013 / LMG 5710 / NBRC 13948 / NRRL B-527 / VKM B-1787 / 2291 / W).